The following is a 397-amino-acid chain: Serine/threonine-protein kinase 17A (397 aa).

The segment at 1–23 (MIPLEKPGSGGSPSAAASGSGPG) is disordered. Position 9 is a phosphoserine (Ser9). One can recognise a Protein kinase domain in the interval 44–304 (LSPGRELGRG…AEECLKHPWL (261 aa)). ATP-binding positions include 50-58 (LGRGKFAVV) and Lys73. Catalysis depends on Asp169, which acts as the Proton acceptor.

The protein belongs to the protein kinase superfamily. CAMK Ser/Thr protein kinase family. DAP kinase subfamily. Post-translationally, autophosphorylated. Highly expressed in bone marrow. Lower levels in brain, heart, lung, liver and kidney.

Its subcellular location is the nucleus. The enzyme catalyses L-seryl-[protein] + ATP = O-phospho-L-seryl-[protein] + ADP + H(+). It carries out the reaction L-threonyl-[protein] + ATP = O-phospho-L-threonyl-[protein] + ADP + H(+). Inhibited by thiazolidinedione-type compounds: inhibited by furan- and pyridone- thiazolidinediones. Functionally, acts as a positive regulator of apoptosis. May also act as a regulator of cellular reactive oxygen species. This chain is Serine/threonine-protein kinase 17A (STK17A), found in Oryctolagus cuniculus (Rabbit).